Consider the following 344-residue polypeptide: Protein RecA (344 aa).

Residue 66-73 (GPESSGKT) coordinates ATP.

It belongs to the RecA family.

The protein localises to the cytoplasm. Functionally, can catalyze the hydrolysis of ATP in the presence of single-stranded DNA, the ATP-dependent uptake of single-stranded DNA by duplex DNA, and the ATP-dependent hybridization of homologous single-stranded DNAs. It interacts with LexA causing its activation and leading to its autocatalytic cleavage. This chain is Protein RecA, found in Azoarcus sp. (strain BH72).